Here is a 442-residue protein sequence, read N- to C-terminus: tRNA modification GTPase MnmE (442 aa).

Residues Arg24, Glu84, and Arg124 each coordinate (6S)-5-formyl-5,6,7,8-tetrahydrofolate. The 149-residue stretch at 218–366 (GARVALFGPV…LRDDMLGRLW (149 aa)) folds into the TrmE-type G domain. Residues 228-233 (NAGKST), 247-253 (DDEPGTT), and 272-275 (DTAG) contribute to the GTP site. Positions 232 and 253 each coordinate Mg(2+). Lys442 lines the (6S)-5-formyl-5,6,7,8-tetrahydrofolate pocket.

Belongs to the TRAFAC class TrmE-Era-EngA-EngB-Septin-like GTPase superfamily. TrmE GTPase family. As to quaternary structure, homodimer. Heterotetramer of two MnmE and two MnmG subunits. K(+) serves as cofactor.

It is found in the cytoplasm. Exhibits a very high intrinsic GTPase hydrolysis rate. Involved in the addition of a carboxymethylaminomethyl (cmnm) group at the wobble position (U34) of certain tRNAs, forming tRNA-cmnm(5)s(2)U34. This is tRNA modification GTPase MnmE from Myxococcus xanthus (strain DK1622).